The following is a 73-amino-acid chain: Kappa-scoloptoxin(03)-Ssm1c (73 aa).

The N-terminal stretch at 1–23 (MKSWMAILLVMALIIFTLDNCYS) is a signal peptide. Disulfide bonds link Cys-32–Cys-58, Cys-41–Cys-57, and Cys-44–Cys-67.

Belongs to the scoloptoxin family. As to expression, expressed by the venom gland.

The protein resides in the secreted. Inhibits voltage-gated potassium channels. The polypeptide is Kappa-scoloptoxin(03)-Ssm1c (Scolopendra mutilans (Chinese red-headed centipede)).